We begin with the raw amino-acid sequence, 122 residues long: Small ribosomal subunit protein uS13 (122 aa).

The segment at 99 to 122 (RGQRTHTNARTRKGPAKAIAGKKK) is disordered.

This sequence belongs to the universal ribosomal protein uS13 family. Part of the 30S ribosomal subunit. Forms a loose heterodimer with protein S19. Forms two bridges to the 50S subunit in the 70S ribosome.

Located at the top of the head of the 30S subunit, it contacts several helices of the 16S rRNA. In the 70S ribosome it contacts the 23S rRNA (bridge B1a) and protein L5 of the 50S subunit (bridge B1b), connecting the 2 subunits; these bridges are implicated in subunit movement. Contacts the tRNAs in the A and P-sites. The protein is Small ribosomal subunit protein uS13 of Rhodopseudomonas palustris (strain TIE-1).